The chain runs to 366 residues: Ribosomal RNA large subunit methyltransferase M (366 aa).

Residues Ser188, 221–224 (CPGG), Asp240, Asp260, and Asp277 each bind S-adenosyl-L-methionine. The active-site Proton acceptor is the Lys306.

It belongs to the class I-like SAM-binding methyltransferase superfamily. RNA methyltransferase RlmE family. RlmM subfamily. As to quaternary structure, monomer.

It is found in the cytoplasm. The enzyme catalyses cytidine(2498) in 23S rRNA + S-adenosyl-L-methionine = 2'-O-methylcytidine(2498) in 23S rRNA + S-adenosyl-L-homocysteine + H(+). In terms of biological role, catalyzes the 2'-O-methylation at nucleotide C2498 in 23S rRNA. The polypeptide is Ribosomal RNA large subunit methyltransferase M (Shigella sonnei (strain Ss046)).